We begin with the raw amino-acid sequence, 314 residues long: Olfactory receptor 1E1 (314 aa).

Residues 1–25 are Extracellular-facing; it reads MMGQNQTSISDFLLLGLPIQPEQQN. Asn-5 carries an N-linked (GlcNAc...) asparagine glycan. A helical transmembrane segment spans residues 26-49; the sequence is LCYALFLAMYLTTLLGNLLIIVLI. At 50–57 the chain is on the cytoplasmic side; sequence RLDSHLHT. The chain crosses the membrane as a helical span at residues 58 to 79; the sequence is PMYLFLSNLSFSDLCFSSVTIP. Over 80-100 the chain is Extracellular; sequence KLLQNMQNQDPSIPYADCLTQ. Residues 101-120 traverse the membrane as a helical segment; sequence MYFFLLFGDLESFLLVAMAY. Over 121–139 the chain is Cytoplasmic; that stretch reads DRYVAICFPLHYTAIMSPM. Residues 140 to 158 form a helical membrane-spanning segment; it reads LCLALVALSWVLTTFHAML. The Extracellular segment spans residues 159–195; the sequence is HTLLMARLCFCADNVIPHFFCDMSALLKLAFSDTRVN. Residues 196-219 form a helical membrane-spanning segment; the sequence is EWVIFIMGGLILVIPFLLILGSYA. Topologically, residues 220–236 are cytoplasmic; sequence RIVSSILKVPSSKGICK. Residues 237–259 form a helical membrane-spanning segment; the sequence is AFSTCGSHLSVVSLFYGTVIGLY. Topologically, residues 260–272 are extracellular; sequence LCSSANSSTLKDT. The chain crosses the membrane as a helical span at residues 273-292; it reads VMAMMYTVVTPMLNPFIYSL. Topologically, residues 293–314 are cytoplasmic; sequence RNRDMKGALSRVIHQKKTFFSL.

It belongs to the G-protein coupled receptor 1 family.

The protein localises to the cell membrane. Functionally, odorant receptor. The polypeptide is Olfactory receptor 1E1 (OR1E1) (Homo sapiens (Human)).